We begin with the raw amino-acid sequence, 372 residues long: UDP-N-acetylglucosamine--N-acetylmuramyl-(pentapeptide) pyrophosphoryl-undecaprenol N-acetylglucosamine transferase (372 aa).

Residues 16-18 (TGG), Asn128, Arg164, Ser192, Ile250, and Gln295 each bind UDP-N-acetyl-alpha-D-glucosamine.

The protein belongs to the glycosyltransferase 28 family. MurG subfamily.

The protein resides in the cell inner membrane. The catalysed reaction is di-trans,octa-cis-undecaprenyl diphospho-N-acetyl-alpha-D-muramoyl-L-alanyl-D-glutamyl-meso-2,6-diaminopimeloyl-D-alanyl-D-alanine + UDP-N-acetyl-alpha-D-glucosamine = di-trans,octa-cis-undecaprenyl diphospho-[N-acetyl-alpha-D-glucosaminyl-(1-&gt;4)]-N-acetyl-alpha-D-muramoyl-L-alanyl-D-glutamyl-meso-2,6-diaminopimeloyl-D-alanyl-D-alanine + UDP + H(+). Its pathway is cell wall biogenesis; peptidoglycan biosynthesis. Functionally, cell wall formation. Catalyzes the transfer of a GlcNAc subunit on undecaprenyl-pyrophosphoryl-MurNAc-pentapeptide (lipid intermediate I) to form undecaprenyl-pyrophosphoryl-MurNAc-(pentapeptide)GlcNAc (lipid intermediate II). The polypeptide is UDP-N-acetylglucosamine--N-acetylmuramyl-(pentapeptide) pyrophosphoryl-undecaprenol N-acetylglucosamine transferase (Paraburkholderia phytofirmans (strain DSM 17436 / LMG 22146 / PsJN) (Burkholderia phytofirmans)).